The following is a 262-amino-acid chain: 3-methyl-2-oxobutanoate hydroxymethyltransferase (262 aa).

Mg(2+) contacts are provided by aspartate 43 and aspartate 82. Residues 43 to 44 (DS), aspartate 82, and lysine 111 contribute to the 3-methyl-2-oxobutanoate site. Glutamate 113 serves as a coordination point for Mg(2+). Glutamate 180 (proton acceptor) is an active-site residue.

It belongs to the PanB family. As to quaternary structure, homodecamer; pentamer of dimers. Requires Mg(2+) as cofactor.

The protein localises to the cytoplasm. It catalyses the reaction 3-methyl-2-oxobutanoate + (6R)-5,10-methylene-5,6,7,8-tetrahydrofolate + H2O = 2-dehydropantoate + (6S)-5,6,7,8-tetrahydrofolate. It participates in cofactor biosynthesis; coenzyme A biosynthesis. Functionally, catalyzes the reversible reaction in which hydroxymethyl group from 5,10-methylenetetrahydrofolate is transferred onto alpha-ketoisovalerate to form ketopantoate. The chain is 3-methyl-2-oxobutanoate hydroxymethyltransferase from Pyrobaculum aerophilum (strain ATCC 51768 / DSM 7523 / JCM 9630 / CIP 104966 / NBRC 100827 / IM2).